Reading from the N-terminus, the 546-residue chain is Cysteine desulfurase SufS (546 aa).

The signal sequence occupies residues 1–22 (MLRGPRCLYIYLFFVFLPFSFC). Lys291 carries the post-translational modification N6-(pyridoxal phosphate)lysine. The active-site Cysteine persulfide intermediate is Cys497.

Belongs to the class-V pyridoxal-phosphate-dependent aminotransferase family. Csd subfamily. As to quaternary structure, monomer. Interacts with SufE; interaction enhances cysteine desulfurase activity of SufS. Pyridoxal 5'-phosphate serves as cofactor. Proteolytically cleaved.

Its subcellular location is the plastid. The protein resides in the apicoplast. The enzyme catalyses (sulfur carrier)-H + L-cysteine = (sulfur carrier)-SH + L-alanine. It functions in the pathway cofactor biosynthesis; iron-sulfur cluster biosynthesis. Catalyzes sulfur activation and mobilization in sulfur mobilization (SUF) pathway for iron-sulfur (Fe-S) cluster biogenesis. Active when in complex with a partner protein SufE. Required for apicoplast maintenance. Plays a role in the development of sporozoites in oocysts in mosquitoes. May provide sulfur for MNMA-mediated tRNA modifications. The chain is Cysteine desulfurase SufS from Plasmodium falciparum (isolate 3D7).